The following is a 284-amino-acid chain: 4-hydroxybenzoate octaprenyltransferase (284 aa).

Helical transmembrane passes span 33 to 53 (VIAA…LGVF), 93 to 113 (IGLF…MNPL), 136 to 156 (HIPQ…AWAA), 159 to 179 (GELP…TIAY), 209 to 229 (LIIG…GQFY), 235 to 252 (YYWT…QQHL), and 264 to 284 (AFLN…VAFW).

The protein belongs to the UbiA prenyltransferase family. Mg(2+) is required as a cofactor.

It localises to the cell inner membrane. It catalyses the reaction all-trans-octaprenyl diphosphate + 4-hydroxybenzoate = 4-hydroxy-3-(all-trans-octaprenyl)benzoate + diphosphate. Its pathway is cofactor biosynthesis; ubiquinone biosynthesis. Functionally, catalyzes the prenylation of para-hydroxybenzoate (PHB) with an all-trans polyprenyl group. Mediates the second step in the final reaction sequence of ubiquinone-8 (UQ-8) biosynthesis, which is the condensation of the polyisoprenoid side chain with PHB, generating the first membrane-bound Q intermediate 3-octaprenyl-4-hydroxybenzoate. The polypeptide is 4-hydroxybenzoate octaprenyltransferase (Vibrio parahaemolyticus serotype O3:K6 (strain RIMD 2210633)).